The sequence spans 253 residues: tRNA (guanine-N(1)-)-methyltransferase (253 aa).

S-adenosyl-L-methionine-binding positions include glycine 111 and 131–136 (LGDFVL).

Belongs to the RNA methyltransferase TrmD family. In terms of assembly, homodimer.

The protein localises to the cytoplasm. The catalysed reaction is guanosine(37) in tRNA + S-adenosyl-L-methionine = N(1)-methylguanosine(37) in tRNA + S-adenosyl-L-homocysteine + H(+). Specifically methylates guanosine-37 in various tRNAs. This chain is tRNA (guanine-N(1)-)-methyltransferase, found in Synechococcus sp. (strain JA-3-3Ab) (Cyanobacteria bacterium Yellowstone A-Prime).